We begin with the raw amino-acid sequence, 787 residues long: Phenylalanine--tRNA ligase beta subunit (787 aa).

A tRNA-binding domain is found at 39–149; it reads APAFAGVVIA…EDAPVGTNIR (111 aa). The 76-residue stretch at 400–475 folds into the B5 domain; the sequence is PEAKQVGLRL…RVYGYENIPD (76 aa). Aspartate 453, aspartate 459, glutamate 462, and glutamate 463 together coordinate Mg(2+). Residues 694 to 786 form the FDX-ACB domain; that stretch reads SKFQPVRRDL…AATAAGARLR (93 aa).

This sequence belongs to the phenylalanyl-tRNA synthetase beta subunit family. Type 1 subfamily. In terms of assembly, tetramer of two alpha and two beta subunits. Requires Mg(2+) as cofactor.

It localises to the cytoplasm. The catalysed reaction is tRNA(Phe) + L-phenylalanine + ATP = L-phenylalanyl-tRNA(Phe) + AMP + diphosphate + H(+). The sequence is that of Phenylalanine--tRNA ligase beta subunit (pheT) from Neisseria meningitidis serogroup B (strain ATCC BAA-335 / MC58).